We begin with the raw amino-acid sequence, 108 residues long: Cyclin-dependent protein kinase inhibitor SMR13 (108 aa).

Probable cyclin-dependent protein kinase (CDK) inhibitor that functions as a repressor of mitosis in the endoreduplication cell cycle. This Arabidopsis thaliana (Mouse-ear cress) protein is Cyclin-dependent protein kinase inhibitor SMR13.